A 259-amino-acid chain; its full sequence is Ubiquinone/menaquinone biosynthesis C-methyltransferase UbiE (259 aa).

Residues threonine 82, aspartate 103, 131 to 132, and serine 148 each bind S-adenosyl-L-methionine; that span reads NA.

This sequence belongs to the class I-like SAM-binding methyltransferase superfamily. MenG/UbiE family.

It catalyses the reaction a 2-demethylmenaquinol + S-adenosyl-L-methionine = a menaquinol + S-adenosyl-L-homocysteine + H(+). The catalysed reaction is a 2-methoxy-6-(all-trans-polyprenyl)benzene-1,4-diol + S-adenosyl-L-methionine = a 5-methoxy-2-methyl-3-(all-trans-polyprenyl)benzene-1,4-diol + S-adenosyl-L-homocysteine + H(+). Its pathway is quinol/quinone metabolism; menaquinone biosynthesis; menaquinol from 1,4-dihydroxy-2-naphthoate: step 2/2. The protein operates within cofactor biosynthesis; ubiquinone biosynthesis. In terms of biological role, methyltransferase required for the conversion of demethylmenaquinol (DMKH2) to menaquinol (MKH2) and the conversion of 2-polyprenyl-6-methoxy-1,4-benzoquinol (DDMQH2) to 2-polyprenyl-3-methyl-6-methoxy-1,4-benzoquinol (DMQH2). The sequence is that of Ubiquinone/menaquinone biosynthesis C-methyltransferase UbiE from Vibrio campbellii (strain ATCC BAA-1116).